Reading from the N-terminus, the 826-residue chain is Arsenite oxidase subunit AioA (826 aa).

[3Fe-4S] cluster contacts are provided by Cys-22, Cys-25, and Cys-29. Residues His-196, Glu-204, Arg-420, and His-424 each contribute to the substrate site.

Belongs to the prokaryotic molybdopterin-containing oxidoreductase family. As to quaternary structure, heterodimer consisting of a large and a small subunit. The cofactor is [3Fe-4S] cluster. Mo-bis(molybdopterin guanine dinucleotide) is required as a cofactor.

It carries out the reaction 2 oxidized [azurin] + arsenite + H2O = 2 reduced [azurin] + arsenate + 3 H(+). Involved in the detoxification of arsenic. Oxidizes As(III)O3(3-) (arsenite) to the somewhat less toxic As(V)O4(3-) (arsenate). This chain is Arsenite oxidase subunit AioA (aioA), found in Alcaligenes faecalis.